We begin with the raw amino-acid sequence, 1680 residues long: Alpha-protein kinase 3 (1680 aa).

A disordered region spans residues 1–37 (MGSRRAAGRGWGLGGRAGAGGDSEDDGPVWTPGPASR). Gly residues predominate over residues 9-21 (RGWGLGGRAGAGG). Residues 77-173 (PLFETTLKSR…SGVLEVGTMT (97 aa)) enclose the Ig-like 1 domain. At S229 the chain carries Phosphoserine. Disordered stretches follow at residues 237–288 (STPV…NGED), 302–759 (ELGP…CPRE), 785–950 (SEEA…GTRS), 1078–1128 (EGSA…LTGL), and 1147–1244 (PKVR…QRKA). Positions 320–337 (KDEESKPGEQKLELEKAE) are enriched in basic and acidic residues. Over residues 339–353 (SQCSSENVVPSTDKP) the composition is skewed to polar residues. Residues 402–426 (APAPAPVPAPALAPAPVPVPAPTPV) show a composition bias toward pro residues. Over residues 514-532 (ESTTTSLSSQTSESMAQSL) the composition is skewed to low complexity. Polar residues-rich tracts occupy residues 557 to 566 (SPLQGQTSHK) and 731 to 744 (ETQS…SLSS). Basic and acidic residues predominate over residues 785–796 (SEEAAFRSHEDG). The segment covering 917–932 (SPTQSHPPEAMATSSE) has biased composition (polar residues). Composition is skewed to basic and acidic residues over residues 1087-1111 (ERTS…ESRT) and 1151-1165 (AGSD…ERES). Residue S1199 is modified to Phosphoserine. Over residues 1231 to 1244 (DEGKQEALAKQRKA) the composition is skewed to basic and acidic residues. The region spanning 1251–1339 (PQVIRKIRVE…GSASTDFCLS (89 aa)) is the Ig-like 2 domain. C1273 and C1323 form a disulfide bridge. In terms of domain architecture, Alpha-type protein kinase spans 1367 to 1600 (KGLADSGCWG…YCDMLGLKPL (234 aa)). The segment at 1603 to 1680 (PEAAHPQAKA…DGSSKAQSMR (78 aa)) is disordered. Composition is skewed to polar residues over residues 1639–1660 (PQGS…QAAT) and 1671–1680 (DGSSKAQSMR).

The protein belongs to the protein kinase superfamily. Alpha-type protein kinase family. ALPK subfamily. As to expression, expressed in the heart and skeletal muscle of adult mice.

The protein localises to the nucleus. It catalyses the reaction L-seryl-[protein] + ATP = O-phospho-L-seryl-[protein] + ADP + H(+). It carries out the reaction L-threonyl-[protein] + ATP = O-phospho-L-threonyl-[protein] + ADP + H(+). In terms of biological role, involved in cardiomyocyte differentiation. The sequence is that of Alpha-protein kinase 3 from Mus musculus (Mouse).